The chain runs to 254 residues: Protein GVQW3 (254 aa).

In Homo sapiens (Human), this protein is Protein GVQW3.